The following is a 249-amino-acid chain: uncharacterized protein (249 aa).

Belongs to the AIM2 family.

It is found in the cytoplasm. Its subcellular location is the nucleus. This is an uncharacterized protein from Schizosaccharomyces pombe (strain 972 / ATCC 24843) (Fission yeast).